Reading from the N-terminus, the 297-residue chain is Vacuolar protein sorting-associated protein 26 (297 aa).

The protein belongs to the VPS26 family. In terms of assembly, component of the retromer complex, composed of VPS26, VPS29 and VPS35. As part of the retromer complex, interacts with the sorting receptor SORTLR/sortilin. Interacts with GTPase RAB7.

Functionally, plays a role in vesicular protein sorting. Component of the membrane-associated retromer complex which is essential in endosome-to-Golgi retrograde transport. This Plasmodium falciparum (isolate 3D7) protein is Vacuolar protein sorting-associated protein 26.